The sequence spans 176 residues: MKFLFDLFPIILFFVAFKIWGIFTATAVAIVATLVQIAWVAFRHRKVDPMLWVSLGVVTVFGGATLVLHNDTFIKWKPTVLYWAFSVALIVSQLAFNKNLIEAMMGKQITLPHAIWGKLSVVWAIFFVLLGLVNLFVAYNYTTDQWVNFKLFGATGCLVVFIVGQSLWLSKYMKEE.

The next 5 membrane-spanning stretches (helical) occupy residues 24-44 (TATAVAIVATLVQIAWVAFRH), 49-69 (PMLWVSLGVVTVFGGATLVLH), 76-96 (WKPTVLYWAFSVALIVSQLAF), 119-139 (LSVVWAIFFVLLGLVNLFVAY), and 149-169 (FKLFGATGCLVVFIVGQSLWL).

The protein belongs to the YciB family.

Its subcellular location is the cell inner membrane. Its function is as follows. Plays a role in cell envelope biogenesis, maintenance of cell envelope integrity and membrane homeostasis. The protein is Inner membrane-spanning protein YciB of Paraburkholderia phytofirmans (strain DSM 17436 / LMG 22146 / PsJN) (Burkholderia phytofirmans).